Reading from the N-terminus, the 315-residue chain is ADP/ATP translocase (315 aa).

At 1 to 13 (MSNKQETKILGMP) the chain is on the mitochondrial intermembrane side. Solcar repeat units lie at residues 13-106 (PPFV…FKAM) and 118-210 (KWMA…IKPV). Residues 14–37 (PFVVDFLMGGVSAAVSKTAAAPIE) form a helical membrane-spanning segment. Lys30 contacts bongkrekate. Residues 38-80 (RIKLLVQNQDEMIKAGRLDRRYNGIIDCFRRTTADEGLMALWR) lie on the Mitochondrial matrix side of the membrane. A cardiolipin is bound by residues Ile62 and 81-83 (GNT). The chain crosses the membrane as a helical span at residues 81-104 (GNTANVIRYFPTQALNFAFRDKFK). Arg88 contributes to the ADP binding site. Bongkrekate contacts are provided by residues 88-89 (RY) and Asn96. The Mitochondrial intermembrane portion of the chain corresponds to 105–115 (AMFGYKKDKDG). The chain crosses the membrane as a helical span at residues 116–145 (YAKWMAGNLASGGAAGATSLLFVYSLDYAR). Residues 146–184 (TRLANDAKSAKGGGARQFNGLIDVYRKTLASDGIAGLYR) are Mitochondrial matrix-facing. A cardiolipin-binding positions include Leu166 and 184–185 (RG). A helical transmembrane segment spans residues 185–213 (GFGPSVAGIVVYRGLYFGMYDSIKPVVLV). Residue 196–197 (YR) coordinates bongkrekate. At 214–216 (GPL) the chain is on the mitochondrial intermembrane side. A helical transmembrane segment spans residues 217 to 242 (ANNFLASFLLGWCVTTGAGIASYPLD). One copy of the Solcar repeat lies at 218–304 (NNFLASFLLG…LSIYDQLQIL (87 aa)). Over 243–283 (TVRRRMMMTSGEAVKYKSSIDAFRQIIAKEGVKSLFKGAGA) the chain is Mitochondrial matrix. Arg245 provides a ligand contact to ADP. Positions 245 to 250 (RRRMMM) match the Nucleotide carrier signature motif motif. A cardiolipin contacts are provided by residues 260 to 261 (SS) and 280 to 282 (GAG). Residues 284 to 304 (NILRGVAGAGVLSIYDQLQIL) form a helical membrane-spanning segment. Residues 305-315 (LFGKAFKGGSG) are Mitochondrial intermembrane-facing.

This sequence belongs to the mitochondrial carrier (TC 2.A.29) family. In terms of assembly, monomer.

The protein localises to the mitochondrion inner membrane. It carries out the reaction ADP(in) + ATP(out) = ADP(out) + ATP(in). The matrix-open state (m-state) is inhibited by the membrane-permeable bongkrekic acid (BKA). The cytoplasmic-open state (c-state) is inhibited by the membrane-impermeable toxic inhibitor carboxyatractyloside (CATR). Functionally, ADP:ATP antiporter that mediates import of ADP into the mitochondrial matrix for ATP synthesis, and export of ATP out to fuel the cell. Cycles between the cytoplasmic-open state (c-state) and the matrix-open state (m-state): operates by the alternating access mechanism with a single substrate-binding site intermittently exposed to either the cytosolic (c-state) or matrix (m-state) side of the inner mitochondrial membrane. In Thermothelomyces thermophilus (strain ATCC 42464 / BCRC 31852 / DSM 1799) (Sporotrichum thermophile), this protein is ADP/ATP translocase.